The sequence spans 141 residues: Galactose-6-phosphate isomerase subunit LacA 1 (141 aa).

It belongs to the LacAB/RpiB family. Heteromultimeric protein consisting of LacA and LacB.

The enzyme catalyses aldehydo-D-galactose 6-phosphate = keto-D-tagatose 6-phosphate. Its pathway is carbohydrate metabolism; D-galactose 6-phosphate degradation; D-tagatose 6-phosphate from D-galactose 6-phosphate: step 1/1. The sequence is that of Galactose-6-phosphate isomerase subunit LacA 1 from Streptococcus pyogenes serotype M6 (strain ATCC BAA-946 / MGAS10394).